Here is a 525-residue protein sequence, read N- to C-terminus: Putative EGF-like domain-containing protein R659 (525 aa).

Residues 1-24 (MGNKWCGIFLTILLLAQMSQTIFG) form the signal peptide. N-linked (GlcNAc...) asparagine; by host glycosylation is found at N60, N77, N171, N181, N268, and N281. The region spanning 317 to 359 (LTQGCGNCDSNAECVFVSGSNSIVPKYQCKCKSGYVGNGTHCS) is the EGF-like domain. Cystine bridges form between C321-C330, C324-C345, and C347-C358. N354 and N411 each carry an N-linked (GlcNAc...) asparagine; by host glycan.

It is found in the secreted. This chain is Putative EGF-like domain-containing protein R659, found in Acanthamoeba polyphaga (Amoeba).